The following is a 482-amino-acid chain: Type II methyltransferase M.AvaI (482 aa).

Belongs to the N(4)/N(6)-methyltransferase family. N(4) subfamily.

The enzyme catalyses a 2'-deoxycytidine in DNA + S-adenosyl-L-methionine = an N(4)-methyl-2'-deoxycytidine in DNA + S-adenosyl-L-homocysteine + H(+). An alpha subtype methylase that recognizes the double-stranded sequence 5'-CYCGRG-3', methylates C-1 on both strands, and protects the DNA from cleavage by the AvaI endonuclease. This is Type II methyltransferase M.AvaI from Anabaena variabilis.